The chain runs to 310 residues: Ribose-phosphate pyrophosphokinase (310 aa).

ATP is bound by residues 33 to 35 and 92 to 93; these read DGE and RQ. Mg(2+) contacts are provided by H127 and D166. Residue K189 is part of the active site. D-ribose 5-phosphate contacts are provided by residues R191, D215, and 219–223; that span reads DTAGT.

The protein belongs to the ribose-phosphate pyrophosphokinase family. Class I subfamily. In terms of assembly, homohexamer. Mg(2+) is required as a cofactor.

The protein resides in the cytoplasm. The enzyme catalyses D-ribose 5-phosphate + ATP = 5-phospho-alpha-D-ribose 1-diphosphate + AMP + H(+). It functions in the pathway metabolic intermediate biosynthesis; 5-phospho-alpha-D-ribose 1-diphosphate biosynthesis; 5-phospho-alpha-D-ribose 1-diphosphate from D-ribose 5-phosphate (route I): step 1/1. In terms of biological role, involved in the biosynthesis of the central metabolite phospho-alpha-D-ribosyl-1-pyrophosphate (PRPP) via the transfer of pyrophosphoryl group from ATP to 1-hydroxyl of ribose-5-phosphate (Rib-5-P). The sequence is that of Ribose-phosphate pyrophosphokinase from Bordetella parapertussis (strain 12822 / ATCC BAA-587 / NCTC 13253).